Reading from the N-terminus, the 1243-residue chain is DNA polymerase II large subunit (1243 aa).

This sequence belongs to the archaeal DNA polymerase II family. As to quaternary structure, heterodimer of a large subunit and a small subunit.

The catalysed reaction is DNA(n) + a 2'-deoxyribonucleoside 5'-triphosphate = DNA(n+1) + diphosphate. It catalyses the reaction Exonucleolytic cleavage in the 3'- to 5'-direction to yield nucleoside 5'-phosphates.. Possesses two activities: a DNA synthesis (polymerase) and an exonucleolytic activity that degrades single-stranded DNA in the 3'- to 5'-direction. Has a template-primer preference which is characteristic of a replicative DNA polymerase. This Nanoarchaeum equitans (strain Kin4-M) protein is DNA polymerase II large subunit.